The sequence spans 210 residues: Thymidylate kinase (210 aa).

14 to 21 contacts ATP; that stretch reads GLDRSGKS.

This sequence belongs to the thymidylate kinase family.

It carries out the reaction dTMP + ATP = dTDP + ADP. Its pathway is pyrimidine metabolism; dTTP biosynthesis. Catalyzes the conversion of dTMP to dTDP. This Schizosaccharomyces pombe (strain 972 / ATCC 24843) (Fission yeast) protein is Thymidylate kinase (tmp1).